The following is a 122-amino-acid chain: Large ribosomal subunit protein uL14c (122 aa).

The protein belongs to the universal ribosomal protein uL14 family. Part of the 50S ribosomal subunit.

It is found in the plastid. Its subcellular location is the chloroplast. Binds to 23S rRNA. The sequence is that of Large ribosomal subunit protein uL14c from Porphyra purpurea (Red seaweed).